The sequence spans 350 residues: Methylthioribose-1-phosphate isomerase (350 aa).

Substrate contacts are provided by residues 48-50 (RGA), Arg93, and Gln198. The Proton donor role is filled by Asp239. Residue 249 to 250 (NK) coordinates substrate.

The protein belongs to the eIF-2B alpha/beta/delta subunits family. MtnA subfamily.

The enzyme catalyses 5-(methylsulfanyl)-alpha-D-ribose 1-phosphate = 5-(methylsulfanyl)-D-ribulose 1-phosphate. It participates in amino-acid biosynthesis; L-methionine biosynthesis via salvage pathway; L-methionine from S-methyl-5-thio-alpha-D-ribose 1-phosphate: step 1/6. Its function is as follows. Catalyzes the interconversion of methylthioribose-1-phosphate (MTR-1-P) into methylthioribulose-1-phosphate (MTRu-1-P). This Fervidobacterium nodosum (strain ATCC 35602 / DSM 5306 / Rt17-B1) protein is Methylthioribose-1-phosphate isomerase.